The primary structure comprises 568 residues: DNA ligase 2 (568 aa).

E254 serves as a coordination point for ATP. K256 functions as the N6-AMP-lysine intermediate in the catalytic mechanism. 6 residues coordinate ATP: R261, R276, E306, F346, R425, and K431.

The protein belongs to the ATP-dependent DNA ligase family. It depends on Mg(2+) as a cofactor.

The enzyme catalyses ATP + (deoxyribonucleotide)n-3'-hydroxyl + 5'-phospho-(deoxyribonucleotide)m = (deoxyribonucleotide)n+m + AMP + diphosphate.. Functionally, DNA ligase that seals nicks in double-stranded DNA during DNA replication, DNA recombination and DNA repair. The sequence is that of DNA ligase 2 from Methanosarcina acetivorans (strain ATCC 35395 / DSM 2834 / JCM 12185 / C2A).